The following is a 309-amino-acid chain: Foldase protein PrsA 2 (309 aa).

Residues 1 to 22 (MKQMNKLITGVVTLATVVTLSA) form the signal peptide. The N-palmitoyl cysteine moiety is linked to residue cysteine 23. Residue cysteine 23 is the site of S-diacylglycerol cysteine attachment. The region spanning 146 to 241 (TPTMTAEIMQ…RTYHIIKVTK (96 aa)) is the PpiC domain.

It belongs to the PrsA family.

Its subcellular location is the cell membrane. It catalyses the reaction [protein]-peptidylproline (omega=180) = [protein]-peptidylproline (omega=0). In terms of biological role, plays a major role in protein secretion by helping the post-translocational extracellular folding of several secreted proteins. The chain is Foldase protein PrsA 2 (prsA2) from Streptococcus pyogenes serotype M3 (strain ATCC BAA-595 / MGAS315).